The sequence spans 555 residues: Potassium-transporting ATPase potassium-binding subunit (555 aa).

The next 10 helical transmembrane spans lie at 2-22, 60-80, 130-150, 173-193, 246-266, 278-298, 374-394, 412-432, 483-503, and 525-545; these read IWVA…PTGI, QYAL…YFIF, IGIT…VMAF, VFLP…VPQT, MSNI…PFTY, ILFV…TTSE, AGFV…GLMV, LIAV…ALAL, LVMF…AASL, and GIFI…MLVL.

Belongs to the KdpA family. As to quaternary structure, the system is composed of three essential subunits: KdpA, KdpB and KdpC.

The protein localises to the cell membrane. In terms of biological role, part of the high-affinity ATP-driven potassium transport (or Kdp) system, which catalyzes the hydrolysis of ATP coupled with the electrogenic transport of potassium into the cytoplasm. This subunit binds the extracellular potassium ions and delivers the ions to the membrane domain of KdpB through an intramembrane tunnel. This chain is Potassium-transporting ATPase potassium-binding subunit, found in Bacillus cereus (strain Q1).